The sequence spans 876 residues: Alanine--tRNA ligase (876 aa).

4 residues coordinate Zn(2+): H568, H572, C669, and H673.

This sequence belongs to the class-II aminoacyl-tRNA synthetase family. Zn(2+) serves as cofactor.

It localises to the cytoplasm. It carries out the reaction tRNA(Ala) + L-alanine + ATP = L-alanyl-tRNA(Ala) + AMP + diphosphate. Its function is as follows. Catalyzes the attachment of alanine to tRNA(Ala) in a two-step reaction: alanine is first activated by ATP to form Ala-AMP and then transferred to the acceptor end of tRNA(Ala). Also edits incorrectly charged Ser-tRNA(Ala) and Gly-tRNA(Ala) via its editing domain. The protein is Alanine--tRNA ligase of Sulfurihydrogenibium sp. (strain YO3AOP1).